Consider the following 210-residue polypeptide: T-cell surface glycoprotein CD8 beta chain (210 aa).

The first 21 residues, 1–21 (MQPGLWLLLATQLAALRGSSV), serve as a signal peptide directing secretion. An Ig-like V-type domain is found at 22-132 (LQQAPGSVMV…ELTFGKGTRL (111 aa)). Over 22 to 170 (LQQAPGSVMV…VTQKGPSCGL (149 aa)) the chain is Extracellular. Cys-41 and Cys-116 are oxidised to a cystine. Asn-102 is a glycosylation site (N-linked (GlcNAc...) asparagine). Residues 139-161 (PTNSQPTKKPTPRKKMCRPPSPV) are disordered. The helical transmembrane segment at 171 to 191 (LTLGLLVAGVLVLLVSLGVAI) threads the bilayer. The Cytoplasmic segment spans residues 192–210 (HLYRLKRRARLRLLKQFYK).

Forms disulfide-linked heterodimers with CD8A at the cell surface. Interacts with CD3D; this interaction couples TCR-CD3 with CD8. Interacts with LCK. In terms of processing, phosphorylated as a consequence of T-cell activation. Post-translationally, palmitoylated at the cytoplasmic tail and thereby targets the heterodimer CD8A/CD8B to lipid rafts unlike CD8A homodimers.

The protein resides in the cell membrane. Integral membrane glycoprotein that plays an essential role in the immune response and serves multiple functions in responses against both external and internal offenses. In T-cells, functions primarily as a coreceptor for MHC class I molecule:peptide complex. The antigens presented by class I peptides are derived from cytosolic proteins while class II derived from extracellular proteins. Interacts simultaneously with the T-cell receptor (TCR) and the MHC class I proteins presented by antigen presenting cells (APCs). In turn, recruits the Src kinase LCK to the vicinity of the TCR-CD3 complex. A palmitoylation site in the cytoplasmic tail of CD8B chain contributes to partitioning of CD8 into the plasma membrane lipid rafts where signaling proteins are enriched. Once LCK recruited, it initiates different intracellular signaling pathways by phosphorylating various substrates ultimately leading to lymphokine production, motility, adhesion and activation of cytotoxic T-lymphocytes (CTLs). Additionally, plays a critical role in thymic selection of CD8+ T-cells. This chain is T-cell surface glycoprotein CD8 beta chain (CD8B), found in Felis catus (Cat).